Consider the following 272-residue polypeptide: Tumor necrosis factor receptor superfamily member 4 (272 aa).

The N-terminal stretch at 1–19 (MYVWVQQPTALLLLALTLG) is a signal peptide. Over 20–211 (VTARRLNCVK…PPTLVTPEGP (192 aa)) the chain is Extracellular. 2 TNFR-Cys repeats span residues 26–61 (NCVK…TLCH) and 62–103 (PCET…DTVC). Intrachain disulfides connect cysteine 27–cysteine 38, cysteine 39–cysteine 52, cysteine 42–cysteine 60, cysteine 63–cysteine 77, cysteine 80–cysteine 95, cysteine 83–cysteine 103, cysteine 105–cysteine 123, and cysteine 126–cysteine 139. The stretch at 104 to 124 (RCRPGTQPRQDSGYKLGVDCV) is one TNFR-Cys 3; truncated repeat. The TNFR-Cys 4 repeat unit spans residues 125–165 (PCPPGHFSPGNNQACKPWTNCTLSGKQTRHPASDSLDAVCE). Asparagine 144 carries an N-linked (GlcNAc...) asparagine glycan. A disulfide bridge links cysteine 145 with cysteine 164. Residues 212–236 (AFAVLLGLGLGLLAPLTVLLALYLL) form a helical membrane-spanning segment. Residues 237–272 (RKAWRLPNTPKPCWGNSFRTPIQEEHTDAHFTLAKI) lie on the Cytoplasmic side of the membrane.

As to quaternary structure, interacts with TRAF2, TRAF3 and TRAF5. In terms of tissue distribution, expressed in CD4(+) T-cells and in T-helper Th17 cells (at protein level).

It localises to the membrane. Receptor for TNFSF4/OX40L/GP34. Is a costimulatory molecule implicated in long-term T-cell immunity. This chain is Tumor necrosis factor receptor superfamily member 4 (Tnfrsf4), found in Mus musculus (Mouse).